The primary structure comprises 2332 residues: Phosphatidylinositol phosphatase PTPRQ (2332 aa).

The N-terminal stretch at 1–35 (MKKVPIKPEQPEKLRAFNISTHSFSLHWSLPSGHV) is a signal peptide. Fibronectin type-III domains follow at residues 36–99 (ERYQ…TKPG), 100–195 (PPVF…TAES), 199–294 (KVVN…SSST), 350–438 (PPQN…PPDV), 441–539 (AVFD…SHPD), 514–606 (GLYE…SVRT), 610–705 (VPSS…TSED), 710–799 (SPQD…TSET), 804–894 (APEN…TEED), 899–988 (PPQD…TPEG), 993–1093 (PPKD…TDQD), 1098–1190 (FVGN…TEED), 1192–1282 (PETS…TDES), 1287–1380 (PPQN…TQES), 1384–1470 (VVQN…LPET), 1474–1578 (VPTN…TLPG), 1583–1681 (PPEN…TLES), and 1686–1787 (PPNN…IKAP). Residues 36–1947 (ERYQVDLVPD…GEGLSERTVE (1912 aa)) are Extracellular-facing. Asn-94 is a glycosylation site (N-linked (GlcNAc...) asparagine). Asn-202 and Asn-394 each carry an N-linked (GlcNAc...) asparagine glycan. 4 N-linked (GlcNAc...) asparagine glycosylation sites follow: Asn-944, Asn-1038, Asn-1080, and Asn-1101. Residues Asn-1290 and Asn-1295 are each glycosylated (N-linked (GlcNAc...) asparagine). A glycan (N-linked (GlcNAc...) asparagine) is linked at Asn-1844. The chain crosses the membrane as a helical span at residues 1948–1968 (IILSVTLCILSIILLGTAIFA). The Cytoplasmic portion of the chain corresponds to 1969–2332 (FARIRQKQKE…VELEWEETTM (364 aa)). One can recognise a Tyrosine-protein phosphatase domain in the interval 2036–2292 (FQEEFSELPK…IFLHQCILDL (257 aa)). The Phosphocysteine intermediate role is filled by Cys-2233.

Belongs to the protein-tyrosine phosphatase family. Receptor class 2A subfamily. In terms of assembly, interacts with TPRN. TPRN, CLIC5 and PTPQR form concentric rings at the base of stereocilia and may form a complex. In terms of tissue distribution, in developing kidney, it localizes to the basal membrane of podocytes, beginning when podocyte progenitors can first be identified in the embryonic kidney (at protein level). Expressed in lung and kidney.

The protein resides in the cell projection. The protein localises to the stereocilium. Its subcellular location is the apical cell membrane. It is found in the basal cell membrane. It catalyses the reaction a 1,2-diacyl-sn-glycero-3-phospho-(1D-myo-inositol-3,4,5-trisphosphate) + H2O = a 1,2-diacyl-sn-glycero-3-phospho-(1D-myo-inositol-4,5-bisphosphate) + phosphate. The enzyme catalyses a 1,2-diacyl-sn-glycero-3-phospho-(1D-myo-inositol-3,4,5-trisphosphate) + H2O = a 1,2-diacyl-sn-glycero-3-phospho-(1D-myo-inositol-3,4-bisphosphate) + phosphate. The catalysed reaction is a 1,2-diacyl-sn-glycero-3-phospho-(1D-myo-inositol-3,5-bisphosphate) + H2O = a 1,2-diacyl-sn-glycero-3-phospho-(1D-myo-inositol-5-phosphate) + phosphate. It carries out the reaction a 1,2-diacyl-sn-glycero-3-phospho-(1D-myo-inositol-3,5-bisphosphate) + H2O = a 1,2-diacyl-sn-glycero-3-phospho-(1D-myo-inositol-3-phosphate) + phosphate. Dephosphorylates phosphatidylinositol phosphates, such as phosphatidylinositol 3,4,5-trisphosphate (PIP3) and phosphatidylinositol 3,5-diphosphates, with preference for PIP3. Phosphate can be hydrolyzed from the D3 and D5 positions in the inositol ring. Has low tyrosine-protein phosphatase activity in vitro; however, the relevance of such activity in vivo is unclear. Plays an important role in adipogenesis of mesenchymal stem cells (MSCs). Regulates the phosphorylation state of AKT1 by regulating the levels of PIP3 in MSCs and preadipocyte cells. Required for hair bundle maturation, a process that enables hair cells to detect and transmit sound and balance signals effectively, therefore affecting auditory function. May act by regulating the level of phosphatidylinositol 4,5-bisphosphate (PIP2) level in the basal region of hair bundles. In Homo sapiens (Human), this protein is Phosphatidylinositol phosphatase PTPRQ (PTPRQ).